Consider the following 536-residue polypeptide: Phosphoenolpyruvate carboxykinase (ATP) (536 aa).

Residues arginine 62, tyrosine 203, and lysine 209 each coordinate substrate. Residues lysine 209, histidine 228, and 244–252 each bind ATP; that span reads GLSGTGKTT. Mn(2+) is bound by residues lysine 209 and histidine 228. Aspartate 265 provides a ligand contact to Mn(2+). Residues glutamate 293, arginine 329, 445 to 446, and threonine 451 each bind ATP; that span reads RI. Arginine 329 contacts substrate.

This sequence belongs to the phosphoenolpyruvate carboxykinase (ATP) family. Monomer. It depends on Mn(2+) as a cofactor.

The protein resides in the cytoplasm. It catalyses the reaction oxaloacetate + ATP = phosphoenolpyruvate + ADP + CO2. Its pathway is carbohydrate biosynthesis; gluconeogenesis. Functionally, involved in the gluconeogenesis. Catalyzes the conversion of oxaloacetate (OAA) to phosphoenolpyruvate (PEP) through direct phosphoryl transfer between the nucleoside triphosphate and OAA. This chain is Phosphoenolpyruvate carboxykinase (ATP), found in Actinobacillus pleuropneumoniae serotype 7 (strain AP76).